The sequence spans 80 residues: Sulfur carrier protein TusA (80 aa).

Catalysis depends on C17, which acts as the Cysteine persulfide intermediate.

The protein belongs to the sulfur carrier protein TusA family.

It is found in the cytoplasm. Sulfur carrier protein which probably makes part of a sulfur-relay system. This is Sulfur carrier protein TusA from Pseudomonas putida (strain W619).